A 418-amino-acid chain; its full sequence is Vacuole membrane protein HFL1 (418 aa).

Residues 1–5 (MENKL) lie on the Extracellular side of the membrane. A helical transmembrane segment spans residues 6-26 (LCWWLYWPCVYSSIIATIISF). At 27–43 (YTITRHLLNYRKPYEQR) the chain is on the cytoplasmic side. The helical transmembrane segment at 44–64 (LSIRILLLVPIFSVSCASGII) threads the bilayer. Topologically, residues 65 to 78 (KPEAAQFYVDPIRE) are extracellular. A helical transmembrane segment spans residues 79–99 (FYEAFVIYTFFTFLTLLLGGE). The Cytoplasmic portion of the chain corresponds to 100–141 (RNIITVLSLNHAPTRHPIPLIGKICKPIDLSDPFDFLFVKKG). The helical transmembrane segment at 142–162 (ILQYVWFKPFYCFGTLICSAW) threads the bilayer. Residues 163-168 (KLPKFE) are Extracellular-facing. The chain crosses the membrane as a helical span at residues 169–189 (IFLNVFYNISVTWSLYSLALF). Over 190 to 205 (WKCLYPELTPYKPWLK) the chain is Cytoplasmic. Residues 206–226 (FLCVKLIIFASYWQSIIIQGL) form a helical membrane-spanning segment. Topologically, residues 227–246 (VVTGKLGTGNQDRTSGYVYK) are extracellular. Residues 247–267 (NGLLCIEMVPFAILHAVAFPW) traverse the membrane as a helical segment. Topologically, residues 268–418 (NKYTAFSIPY…DVQSRSSMAC (151 aa)) are cytoplasmic. Residues 379-402 (RTFPEDPNYPVVHDYTMGHRYSRS) are ATG8-interacting region.

The protein belongs to the TMEM184 family. In terms of assembly, interacts with ATG8.

Its subcellular location is the vacuole membrane. Vacuole membrane protein that recruits ATG8 to facilitate the degradation of vacuolar integral membrane proteins during early-stationary vacuole turnover (EVT) when cells enter stationary phase. In Saccharomyces cerevisiae (strain ATCC 204508 / S288c) (Baker's yeast), this protein is Vacuole membrane protein HFL1.